Consider the following 124-residue polypeptide: Large ribosomal subunit protein bL12 (124 aa).

It belongs to the bacterial ribosomal protein bL12 family. In terms of assembly, homodimer. Part of the ribosomal stalk of the 50S ribosomal subunit. Forms a multimeric L10(L12)X complex, where L10 forms an elongated spine to which 2 to 4 L12 dimers bind in a sequential fashion. Binds GTP-bound translation factors.

Its function is as follows. Forms part of the ribosomal stalk which helps the ribosome interact with GTP-bound translation factors. Is thus essential for accurate translation. The protein is Large ribosomal subunit protein bL12 of Cupriavidus taiwanensis (strain DSM 17343 / BCRC 17206 / CCUG 44338 / CIP 107171 / LMG 19424 / R1) (Ralstonia taiwanensis (strain LMG 19424)).